The primary structure comprises 267 residues: MAEPLTVSPELTANYAYFFDLDGTLAEIKPHPDQVVVPHKILQLLDRLAAHNAGALALISGRSMTELDALAKPFRFPLAGVHGAERRDINGKTHIVRLPEAVVREVEALLRSTLVALPGTELESKGMAFALHYRQAPEHEAALLALAQHVTQHWPQLALQLGKCVVEIKPKGTNKGEAIAAFMQEAPFAGRIPVFVGDDLTDEAGFGVVNHAGGISVKVGVGATQAAWRLESVPDVWRWLEQINYPQQEQQVMNNRRDGYESFSRSI.

D20 functions as the Nucleophile in the catalytic mechanism. Positions 20, 22, and 198 each coordinate Mg(2+). 20-22 (DLD) is a binding site for substrate.

It belongs to the trehalose phosphatase family. Mg(2+) serves as cofactor.

It catalyses the reaction alpha,alpha-trehalose 6-phosphate + H2O = alpha,alpha-trehalose + phosphate. It participates in glycan biosynthesis; trehalose biosynthesis. Functionally, removes the phosphate from trehalose 6-phosphate to produce free trehalose. This Salmonella typhimurium (strain SL1344) protein is Trehalose-phosphate phosphatase (otsB).